The chain runs to 825 residues: MERPRGAADGLLRWPLGLLLLLQLLPPAAVGQDRLDAPPPPAPPLLRWAGPVGVSWGLRAAAPGGPVPRAGRWRRGAPAEDQDCGRLPDFIAKLTNNTHQHVFDDLSGSVSLSWVGDSTGVILVLTTFQVPLVIVSFGQSKLYRSEDYGKNFKDITNLINNTFIRTEFGMAIGPENSGKVILTAEVSGGSRGGRVFRSSDFAKNFVQTDLPFHPLTQMMYSPQNSDYLLALSTENGLWVSKNFGEKWEEIHKAVCLAKWGPNNIIFFTTHVNGSCKADLGALELWRTSDLGKTFKTIGVKIYSFGLGGRFLFASVMADKDTTRRIHVSTDQGDTWSMAQLPSVGQEQFYSILAANEDMVFMHVDEPGDTGFGTIFTSDDRGIVYSKSLDRHLYTTTGGETDFTNVTSLRGVYITSTLSEDNSIQSMITFDQGGRWEHLRKPENSKCDATAKNKNECSLHIHASYSISQKLNVPMAPLSEPNAVGIVIAHGSVGDAISVMVPDVYISDDGGYSWAKMLEGPHYYTILDSGGIIVAIEHSNRPINVIKFSTDEGQCWQSYVFTQEPIYFTGLASEPGARSMNISIWGFTESFITRQWVSYTVDFKDILERNCEEDDYTTWLAHSTDPGDYKDGCILGYKEQFLRLRKSSVCQNGRDYVVAKQPSVCPCSLEDFLCDFGYFRPENASECVEQPELKGHELEFCLYGKEEHLTTNGYRKIPGDKCQGGMNPAREVKDLKKKCTSNFLNPTKQNSKSNSVPIILAIVGLMLVTVVAGVLIVKKYVCGGRFLVHRYSVLQQHAEADGVEALDSTSHAKSGYHDDSDEDLLE.

A signal peptide spans 1-31 (MERPRGAADGLLRWPLGLLLLLQLLPPAAVG). Positions 32–73 (QDRLDAPPPPAPPLLRWAGPVGVSWGLRAAAPGGPVPRAGRW) are cleaved as a propeptide — removed in mature form. The intrachain binding of the propeptide and the extracellular domain stretch occupies residues 48 to 59 (WAGPVGVSWGLR). At 74–754 (RRGAPAEDQD…PTKQNSKSNS (681 aa)) the chain is on the extracellular side. 3 disulfide bridges follow: Cys-84-Cys-554, Cys-255-Cys-275, and Cys-446-Cys-456. Asn-96 is a glycosylation site (N-linked (GlcNAc...) asparagine). The BNR 1 repeat unit spans residues 143–154 (YRSEDYGKNFKD). A glycan (N-linked (GlcNAc...) asparagine) is linked at Asn-160. 2 BNR repeats span residues 196–207 (FRSSDFAKNFVQ) and 238–249 (WVSKNFGEKWEE). Residue Asn-272 is glycosylated (N-linked (GlcNAc...) asparagine). BNR repeat units lie at residues 285 to 296 (WRTSDLGKTFKT), 326 to 337 (HVSTDQGDTWSM), and 375 to 386 (FTSDDRGIVYSK). N-linked (GlcNAc...) asparagine glycosylation is present at Asn-404. A BNR 7 repeat occupies 426-437 (MITFDQGGRWEH). BNR repeat units lie at residues 504–515 (YISDDGGYSWAK) and 546–557 (KFSTDEGQCWQS). N-linked (GlcNAc...) asparagine glycosylation occurs at Asn-580. 5 disulfide bridges follow: Cys-610/Cys-649, Cys-632/Cys-664, Cys-666/Cys-721, Cys-673/Cys-686, and Cys-700/Cys-738. An interactions with LRPAP1 and NGFB region spans residues 610 to 754 (CEEDDYTTWL…PTKQNSKSNS (145 aa)). N-linked (GlcNAc...) asparagine glycosylation is present at Asn-682. A helical transmembrane segment spans residues 755–775 (VPIILAIVGLMLVTVVAGVLI). Residues 776–825 (VKKYVCGGRFLVHRYSVLQQHAEADGVEALDSTSHAKSGYHDDSDEDLLE) are Cytoplasmic-facing. Residues 777-825 (KKYVCGGRFLVHRYSVLQQHAEADGVEALDSTSHAKSGYHDDSDEDLLE) are golgi to endosome transport and interactions with GGA1 and GGA2. Residue Cys-781 is the site of S-palmitoyl cysteine attachment. An Endocytosis signal motif is present at residues 785-790 (FLVHRY). The tract at residues 804-825 (ALDSTSHAKSGYHDDSDEDLLE) is disordered. 3 positions are modified to phosphoserine: Ser-809, Ser-813, and Ser-819. The DXXLL motif involved in the interaction with GGA1 motif lies at 820–824 (DEDLL).

The protein belongs to the VPS10-related sortilin family. SORT1 subfamily. Interacts with the cytosolic adapter proteins GGA1 and GGA2. Interacts with numerous ligands including the receptor-associated protein LRPAP1/RAP, NTS and GM2A. Forms a complex with NGFR which binds specifically to the precursor forms of NGFB (proNGFB) and BDNF (proBDNF). Interacts with the Trk receptors NTRK1, NTRK2 and NTRK3; may regulate their anterograde axonal transport and signaling. Interacts with LPL. Interacts with PSAP. Interacts with SLC2A4. Interacts with NRADD and NGFR. Interaction with NRADD protects against degradation in the lysosome. Interacts with CLN5. Interacts with GRN; this interaction mediates endocytosis and lysosome delivery of progranulin; interaction occurs at the neuronal cell surface in a stressed nervous system. Interacts with the heterotrimeric retromer cargo-selective complex (CSC), also described as vacuolar protein sorting subcomplex (VPS), formed by VPS26 (VPS26A or VPS26B), VPS29 and VPS35; which is involved in retrograde trafficking of the receptor from endosomes to the Golgi apparatus. Interacts with SMPD1; the interaction is required for SMPD1 targeting to lysosomes. In terms of processing, the N-terminal propeptide is cleaved by furin and possibly other homologous proteases. Post-translationally, phosphorylation at Ser-819 facilitates the interaction with GGA1. Palmitoylated. Undergoes cysteine S-palmitoylation which promotes the partitioning of the receptor into an endosomal membrane subdomain where it can interact with the retromer cargo-selective complex which mediates its retrograde trafficking to the Golgi apparatus. Expressed in the brain, particularly the piriform cortex, the cerebral cortex and the hippocampus.

It is found in the golgi apparatus. It localises to the golgi stack membrane. The protein resides in the endosome membrane. The protein localises to the endoplasmic reticulum membrane. Its subcellular location is the nucleus membrane. It is found in the cell membrane. It localises to the lysosome membrane. Functions as a sorting receptor in the Golgi compartment and as a clearance receptor on the cell surface. Required for protein transport from the Golgi apparatus to the lysosomes by a pathway that is independent of the mannose-6-phosphate receptor (M6PR). Lysosomal proteins bind specifically to the receptor in the Golgi apparatus and the resulting receptor-ligand complex is transported to an acidic prelysosomal compartment where the low pH mediates the dissociation of the complex. The receptor is then recycled back to the Golgi for another round of trafficking through its binding to the retromer. Also required for protein transport from the Golgi apparatus to the endosomes. Promotes neuronal apoptosis by mediating endocytosis of the proapoptotic precursor forms of BDNF (proBDNF) and NGFB (proNGFB). Also acts as a receptor for neurotensin. May promote mineralization of the extracellular matrix during osteogenic differentiation by scavenging extracellular LPL. Probably required in adipocytes for the formation of specialized storage vesicles containing the glucose transporter SLC2A4/GLUT4 (GLUT4 storage vesicles, or GSVs). These vesicles provide a stable pool of SLC2A4 and confer increased responsiveness to insulin. May also mediate transport from the endoplasmic reticulum to the Golgi. This is Sortilin from Mus musculus (Mouse).